Reading from the N-terminus, the 197-residue chain is Protein mago nashi homolog (197 aa).

The segment covering 1 to 10 (MSDVDTKIEL) has biased composition (basic and acidic residues). Residues 1–43 (MSDVDTKIELATDSAMDITSPENDNNKTTATATSSSETQTTED) are disordered. Residues 28-42 (TTATATSSSETQTTE) show a composition bias toward low complexity.

This sequence belongs to the mago nashi family.

The protein localises to the nucleus. This Dictyostelium discoideum (Social amoeba) protein is Protein mago nashi homolog (magoh).